Reading from the N-terminus, the 81-residue chain is Acyl carrier protein (81 aa).

The Carrier domain maps to 4–79 (SEILEKVKAI…DVLDFINNKV (76 aa)). S39 carries the post-translational modification O-(pantetheine 4'-phosphoryl)serine.

This sequence belongs to the acyl carrier protein (ACP) family. In terms of processing, 4'-phosphopantetheine is transferred from CoA to a specific serine of apo-ACP by AcpS. This modification is essential for activity because fatty acids are bound in thioester linkage to the sulfhydryl of the prosthetic group.

It localises to the cytoplasm. The protein operates within lipid metabolism; fatty acid biosynthesis. Carrier of the growing fatty acid chain in fatty acid biosynthesis. The chain is Acyl carrier protein from Thermosynechococcus vestitus (strain NIES-2133 / IAM M-273 / BP-1).